The chain runs to 573 residues: Protein FAM227B (573 aa).

The stretch at 429–485 (DNKKDFKRVKQRIKDDIKFLKEQQEQIDKELDRLQAKASKNLQEVKNDFENFLHKLR) forms a coiled coil. The span at 497-521 (SASPSESLQSLQSPNSSLSSPAMSE) shows a compositional bias: low complexity. The disordered stretch occupies residues 497–528 (SASPSESLQSLQSPNSSLSSPAMSEDFNSVEE).

Belongs to the FAM227 family.

The protein is Protein FAM227B (Fam227b) of Rattus norvegicus (Rat).